Consider the following 132-residue polypeptide: MSMQDTVADMLTRIRNAQMARKVSVAMPSSKLRKSIADLLVQEGYIASAEVTDEGNGKATLSIELKYFEGKPVIEVIKRYSRPGLRQYRGKDAIPSVQQGLGVAIVSTSKGIMSDRAARAAGIGGEIIAFVA.

This sequence belongs to the universal ribosomal protein uS8 family. In terms of assembly, part of the 30S ribosomal subunit. Contacts proteins S5 and S12.

Its function is as follows. One of the primary rRNA binding proteins, it binds directly to 16S rRNA central domain where it helps coordinate assembly of the platform of the 30S subunit. The sequence is that of Small ribosomal subunit protein uS8 from Psychrobacter sp. (strain PRwf-1).